We begin with the raw amino-acid sequence, 351 residues long: UDP-3-O-acylglucosamine N-acyltransferase (351 aa).

The Proton acceptor role is filled by His240.

It belongs to the transferase hexapeptide repeat family. LpxD subfamily. Homotrimer.

It catalyses the reaction a UDP-3-O-[(3R)-3-hydroxyacyl]-alpha-D-glucosamine + a (3R)-hydroxyacyl-[ACP] = a UDP-2-N,3-O-bis[(3R)-3-hydroxyacyl]-alpha-D-glucosamine + holo-[ACP] + H(+). The protein operates within bacterial outer membrane biogenesis; LPS lipid A biosynthesis. Its function is as follows. Catalyzes the N-acylation of UDP-3-O-acylglucosamine using 3-hydroxyacyl-ACP as the acyl donor. Is involved in the biosynthesis of lipid A, a phosphorylated glycolipid that anchors the lipopolysaccharide to the outer membrane of the cell. The protein is UDP-3-O-acylglucosamine N-acyltransferase of Pseudomonas entomophila (strain L48).